The following is a 102-amino-acid chain: Small ribosomal subunit protein uS10 (102 aa).

It belongs to the universal ribosomal protein uS10 family. In terms of assembly, part of the 30S ribosomal subunit.

In terms of biological role, involved in the binding of tRNA to the ribosomes. This chain is Small ribosomal subunit protein uS10, found in Streptococcus pyogenes serotype M3 (strain SSI-1).